The primary structure comprises 351 residues: DNA integrity scanning protein DisA (351 aa).

Positions 4-142 constitute a DAC domain; sequence RSGFWQVLQQ…GPMKYILRDF (139 aa). ATP contacts are provided by residues Gly71, Leu89, and 102–106; that span reads TRHRT.

It belongs to the DisA family. In terms of assembly, homooctamer. The cofactor is Mg(2+).

It catalyses the reaction 2 ATP = 3',3'-c-di-AMP + 2 diphosphate. In terms of biological role, participates in a DNA-damage check-point that is active prior to asymmetric division when DNA is damaged. DisA forms globular foci that rapidly scan along the chromosomes during sporulation, searching for lesions. When a lesion is present, DisA pauses at the lesion site. This triggers a cellular response that culminates in a temporary block in sporulation initiation. Its function is as follows. Also has diadenylate cyclase activity, catalyzing the condensation of 2 ATP molecules into cyclic di-AMP (c-di-AMP). c-di-AMP acts as a signaling molecule that couples DNA integrity with progression of sporulation. The rise in c-di-AMP level generated by DisA while scanning the chromosome, operates as a positive signal that advances sporulation; upon encountering a lesion, the DisA focus arrests at the damaged site and halts c-di-AMP synthesis. This Symbiobacterium thermophilum (strain DSM 24528 / JCM 14929 / IAM 14863 / T) protein is DNA integrity scanning protein DisA.